The sequence spans 180 residues: Pro-glucagon (180 aa).

The first 20 residues, 1-20, serve as a signal peptide directing secretion; that stretch reads MKTVYIVAGLFVMLVQGSWQ. Positions 23 to 59 are disordered; sequence PQDTEENARSFPASQTEPLEDPDQINEDKRHSQGTFT. Ser-54 carries the post-translational modification Phosphoserine. Residues 84–89 constitute a propeptide that is removed on maturation; the sequence is NRNNIA. Phosphoserine is present on residues Ser-105 and Ser-108. An Arginine amide modification is found at Arg-127. Positions 131–145 are excised as a propeptide; it reads DFPEEVAIAEELGRR. A phosphoserine mark is found at Ser-150 and Ser-152.

This sequence belongs to the glucagon family. Proglucagon is post-translationally processed in a tissue-specific manner in pancreatic A cells and intestinal L cells. In pancreatic A cells, the major bioactive hormone is glucagon cleaved by PCSK2/PC2. In the intestinal L cells PCSK1/PC1 liberates GLP-1, GLP-2, glicentin and oxyntomodulin. GLP-1 is further N-terminally truncated by post-translational processing in the intestinal L cells resulting in GLP-1(7-37) GLP-1-(7-36)amide. The C-terminal amidation is neither important for the metabolism of GLP-1 nor for its effects on the endocrine pancreas. Glucagon is secreted in the A cells of the islets of Langerhans. GLP-1, GLP-2, oxyntomodulin and glicentin are secreted from enteroendocrine cells throughout the gastrointestinal tract.

The protein resides in the secreted. In terms of biological role, plays a key role in glucose metabolism and homeostasis. Regulates blood glucose by increasing gluconeogenesis and decreasing glycolysis. A counterregulatory hormone of insulin, raises plasma glucose levels in response to insulin-induced hypoglycemia. Plays an important role in initiating and maintaining hyperglycemic conditions in diabetes. Functionally, potent stimulator of glucose-dependent insulin release. Also stimulates insulin release in response to IL6. Plays important roles on gastric motility and the suppression of plasma glucagon levels. May be involved in the suppression of satiety and stimulation of glucose disposal in peripheral tissues, independent of the actions of insulin. Has growth-promoting activities on intestinal epithelium. May also regulate the hypothalamic pituitary axis (HPA) via effects on LH, TSH, CRH, oxytocin, and vasopressin secretion. Increases islet mass through stimulation of islet neogenesis and pancreatic beta cell proliferation. Inhibits beta cell apoptosis. Stimulates intestinal growth and up-regulates villus height in the small intestine, concomitant with increased crypt cell proliferation and decreased enterocyte apoptosis. The gastrointestinal tract, from the stomach to the colon is the principal target for GLP-2 action. Plays a key role in nutrient homeostasis, enhancing nutrient assimilation through enhanced gastrointestinal function, as well as increasing nutrient disposal. Stimulates intestinal glucose transport and decreases mucosal permeability. Its function is as follows. May modulate gastric acid secretion and the gastro-pyloro-duodenal activity. May play an important role in intestinal mucosal growth in the early period of life. In terms of biological role, oxyntomodulin significantly reduces food intake. The protein is Pro-glucagon (Gcg) of Rattus norvegicus (Rat).